Consider the following 138-residue polypeptide: MLIPRRVKHRKQHHPGRSGAATGGTKVSFGEWGIQALSPAYVTNRQIESARIAMTRHIKRGGKVWINIYPDRPLTKKPAETRMGSGKGSPEWWVSNVKPGRVLFELSGVSEEVAREALRLAIHKLPLKARIVRREGGE.

A compositionally biased stretch (basic residues) spans 1–16 (MLIPRRVKHRKQHHPG). The tract at residues 1 to 24 (MLIPRRVKHRKQHHPGRSGAATGG) is disordered.

Belongs to the universal ribosomal protein uL16 family. In terms of assembly, part of the 50S ribosomal subunit.

Its function is as follows. Binds 23S rRNA and is also seen to make contacts with the A and possibly P site tRNAs. The protein is Large ribosomal subunit protein uL16 of Arthrobacter sp. (strain FB24).